The sequence spans 325 residues: MANQKLPTLKYTGKSESAVPIVSESELQTVTAEPWVKISDKGLQLEGLNFNREGQLFLLDVFEGNIFKVNPATKEVTTKFQSVKDNPAAIKVHKDGRLFICYLGDFKTTGGIFATTEKGEQIEEIISDLNTEYCIDDMVFDSKGGFYFTDFRGYSTQPLGGVYYVDPDFKTVTPIIQNISVANGIALSTDEKVLWVTETTTNRLHRIALENDGVTIAPFGATIPYYFTGHEGPDSCCIDSDDNLYVAMYGQGRVLVFNKRGYPIGQILMPGRDDGKMLRTTHPQFIPGTNQLIICTNDIENHSEGGSMLYTVNGFAKGYESYQFQ.

Glutamate 46, threonine 108, glycine 110, aspartate 128, threonine 131, tyrosine 133, aspartate 136, asparagine 183, aspartate 234, and serine 235 together coordinate Ca(2+). Residue aspartate 234 is the Proton donor of the active site.

This sequence belongs to the SMP-30/CGR1 family. Ca(2+) serves as cofactor.

It is found in the cytoplasm. Functionally, exhibits lactonase activity. Acts in cells with perturbed membrane integrity and is possibly related to the membrane homeostasis. The polypeptide is Lactonase drp35 (drp35) (Staphylococcus epidermidis (strain ATCC 12228 / FDA PCI 1200)).